We begin with the raw amino-acid sequence, 2429 residues long: Reducing polyketide synthase ppsB (2429 aa).

Residues 4–442 (DERVAIIGTG…GTNAHAILES (439 aa)) enclose the Ketosynthase family 3 (KS3) domain. Catalysis depends on for beta-ketoacyl synthase activity residues C177, H317, and H362. Residues 558–873 (VFTGQGAQWP…PYIGLAHRGE (316 aa)) are malonyl-CoA:ACP transacylase (MAT) domain. The active-site For acyl/malonyl transferase activity is S652. Residues 945 to 1075 (HPLLGVLSSE…GRVILALGEA (131 aa)) form an N-terminal hotdog fold region. The product template (PT) domain stretch occupies residues 945–1227 (HPLLGVLSSE…QLEGIHLTLS (283 aa)). The PKS/mFAS DH domain maps to 945–1233 (HPLLGVLSSE…LTLSKPKNSS (289 aa)). Residues 1090 to 1233 (SYPMNVDKFY…LTLSKPKNSS (144 aa)) form a C-terminal hotdog fold region. The segment at 1409–2158 (LEVGAGTGSA…ISDLYDQLTS (750 aa)) is methyltransferase (CMeT) domain. A Carrier domain is found at 2350–2425 (EIILQLFKEK…SMVDEVVKRR (76 aa)). The residue at position 2385 (S2385) is an O-(pantetheine 4'-phosphoryl)serine.

Its pathway is secondary metabolite biosynthesis. Reducing polyketide synthase; part of the gene cluster that mediates the biosynthesis of 2,4'-dihydroxy-3'-methoxypropiophenone. The first step of the pathway is the conversion of acetate into acetyl-CoA by the acyl-CoA ligase ppsA. Acetyl-CoA is then used as a starter unit by the polyketide synthase ppsB and condensed with 4 malonyl-CoA unit to produce the pentaketide backbone. During polyketide extension, the polykedite chain is probably reduced and dehydrated by the KR and PT domains, respectively. O-methylation seems to be catalyzed by an unknown methyltransferase rather than by the CMeT domain of ppsB. Two hydroxylations and one further decarboxylation step catalyzed by yet unknown enzymes are then required to yield 4'-hydroxy-3'-methoxypropiophenone. PpsC functions as a carrier protein to transport 4'-hydroxy-3'-methoxypropiophenone to a specific cell compartment in which 4'-hydroxy-3'-methoxypropiophenone is hydroxylated to 2,4'-dihydroxy-3'-methoxypropiophenone by a still to be identified enzyme. The polypeptide is Reducing polyketide synthase ppsB (Aspergillus oryzae (strain ATCC 42149 / RIB 40) (Yellow koji mold)).